A 197-amino-acid polypeptide reads, in one-letter code: MQKVVLATGNAGKVRELASLLSDFGLDIVAQTELGVDSAEETGLTFIENAILKARHAAKVTGLPAIADDSGLAVDVLGGAPGIYSARYSGEDATDQKNLQKLLETLKDVPDDQRQARFHCVLVYLRHAEDPTPLVCHGSWPGVITREPAGTGGFGYDPIFFVPSEGKTAAELTREEKSAISHRGQALKLLLDALRNG.

8-13 (TGNAGK) lines the substrate pocket. 2 residues coordinate Mg(2+): Glu40 and Asp69. The active-site Proton acceptor is Asp69. Residues Ser70, 154–157 (FGYD), Lys177, and 182–183 (HR) each bind substrate.

The protein belongs to the HAM1 NTPase family. Homodimer. Mg(2+) serves as cofactor.

It catalyses the reaction XTP + H2O = XMP + diphosphate + H(+). The catalysed reaction is dITP + H2O = dIMP + diphosphate + H(+). The enzyme catalyses ITP + H2O = IMP + diphosphate + H(+). Its function is as follows. Pyrophosphatase that catalyzes the hydrolysis of nucleoside triphosphates to their monophosphate derivatives, with a high preference for the non-canonical purine nucleotides XTP (xanthosine triphosphate), dITP (deoxyinosine triphosphate) and ITP. Seems to function as a house-cleaning enzyme that removes non-canonical purine nucleotides from the nucleotide pool, thus preventing their incorporation into DNA/RNA and avoiding chromosomal lesions. The chain is dITP/XTP pyrophosphatase (rdgB) from Escherichia coli O157:H7.